Reading from the N-terminus, the 141-residue chain is MVLYANRESLIKRYTLKVLEQIAWLPEAQSLDEAKVQEALEDASQTIDSYLGGRYVLPLKTVPAVLERHCCYIARYFLEKNRATDQARQDYEDTIRFLEKVASGAISLGLSDDDETVESENGAMMESAGSVWGRNTSKGFI.

To phage Mu protein gp36.

The chain is Mu-like prophage FluMu protein gp36 from Haemophilus influenzae (strain ATCC 51907 / DSM 11121 / KW20 / Rd).